We begin with the raw amino-acid sequence, 257 residues long: Type III pantothenate kinase (257 aa).

6–13 serves as a coordination point for ATP; it reads DCGNTNTV. 107 to 110 provides a ligand contact to substrate; the sequence is GPDR. Residue Asp-109 is the Proton acceptor of the active site. Asp-129 serves as a coordination point for K(+). Thr-132 contacts ATP. Position 184 (Thr-184) interacts with substrate.

This sequence belongs to the type III pantothenate kinase family. As to quaternary structure, homodimer. Requires NH4(+) as cofactor. The cofactor is K(+).

It localises to the cytoplasm. The enzyme catalyses (R)-pantothenate + ATP = (R)-4'-phosphopantothenate + ADP + H(+). It functions in the pathway cofactor biosynthesis; coenzyme A biosynthesis; CoA from (R)-pantothenate: step 1/5. Functionally, catalyzes the phosphorylation of pantothenate (Pan), the first step in CoA biosynthesis. This is Type III pantothenate kinase from Roseobacter denitrificans (strain ATCC 33942 / OCh 114) (Erythrobacter sp. (strain OCh 114)).